The following is a 360-amino-acid chain: Aminomethyltransferase (360 aa).

This sequence belongs to the GcvT family. As to quaternary structure, the glycine cleavage system is composed of four proteins: P, T, L and H.

It catalyses the reaction N(6)-[(R)-S(8)-aminomethyldihydrolipoyl]-L-lysyl-[protein] + (6S)-5,6,7,8-tetrahydrofolate = N(6)-[(R)-dihydrolipoyl]-L-lysyl-[protein] + (6R)-5,10-methylene-5,6,7,8-tetrahydrofolate + NH4(+). Functionally, the glycine cleavage system catalyzes the degradation of glycine. This is Aminomethyltransferase from Pseudomonas putida (strain ATCC 47054 / DSM 6125 / CFBP 8728 / NCIMB 11950 / KT2440).